The following is a 324-amino-acid chain: Glyoxylate/hydroxypyruvate reductase B (324 aa).

Catalysis depends on residues Arg237 and Glu266. The active-site Proton donor is the His285.

It belongs to the D-isomer specific 2-hydroxyacid dehydrogenase family. GhrB subfamily. As to quaternary structure, homodimer.

The protein resides in the cytoplasm. It catalyses the reaction glycolate + NADP(+) = glyoxylate + NADPH + H(+). The catalysed reaction is (R)-glycerate + NAD(+) = 3-hydroxypyruvate + NADH + H(+). The enzyme catalyses (R)-glycerate + NADP(+) = 3-hydroxypyruvate + NADPH + H(+). Catalyzes the NADPH-dependent reduction of glyoxylate and hydroxypyruvate into glycolate and glycerate, respectively. This is Glyoxylate/hydroxypyruvate reductase B from Salmonella schwarzengrund (strain CVM19633).